Here is a 221-residue protein sequence, read N- to C-terminus: Oligoribonuclease (221 aa).

Residues 21 to 186 (LVWVDLEMTG…ADIVESIREL (166 aa)) enclose the Exonuclease domain. The active site involves Tyr-143.

Belongs to the oligoribonuclease family.

The protein localises to the cytoplasm. 3'-to-5' exoribonuclease specific for small oligoribonucleotides. The protein is Oligoribonuclease of Corynebacterium efficiens (strain DSM 44549 / YS-314 / AJ 12310 / JCM 11189 / NBRC 100395).